The chain runs to 592 residues: Glutathione-regulated potassium-efflux system protein KefB (592 aa).

A run of 13 helical transmembrane segments spans residues 4–24, 29–49, 55–75, 87–107, 115–135, 152–172, 177–197, 207–227, 230–250, 268–288, 291–311, 324–344, and 356–376; these read SDFLLAGVLFLFAAVAAVPLA, IGAVLGYLLAGIAIGPWGLGF, EILHFSELGVVFLMFIIGLEL, IFGVGAAQVLLSAALLAGLLM, AAVVGGIGLAMSSTAMALQLM, VLLFQDLAVIPALALVPLLAG, HFDWMKIGMKVLAFVGMLIGG, FIAASGVREVFTAATLLLVLG, LFMDALGLSMALGTFIAGVLL, GLLLGLFFISVGMSLNLGVLY, LLWVVISVVVLVAVKILVLYL, MQFAGVLSQGGEFAFVLFSTA, and ALLLVTVTLSMMTTPLLMKLV. An RCK N-terminal domain is found at 400-519; the sequence is KPQVIVVGFG…AGVTQFSRET (120 aa).

Belongs to the monovalent cation:proton antiporter 2 (CPA2) transporter (TC 2.A.37) family. KefB subfamily. In terms of assembly, interacts with the regulatory subunit KefG.

The protein resides in the cell inner membrane. Functionally, pore-forming subunit of a potassium efflux system that confers protection against electrophiles. Catalyzes K(+)/H(+) antiport. This is Glutathione-regulated potassium-efflux system protein KefB from Escherichia coli O157:H7.